Consider the following 213-residue polypeptide: Uridine kinase (213 aa).

12–19 serves as a coordination point for ATP; it reads GGSCSGKT.

It belongs to the uridine kinase family.

Its subcellular location is the cytoplasm. The enzyme catalyses uridine + ATP = UMP + ADP + H(+). It carries out the reaction cytidine + ATP = CMP + ADP + H(+). Its pathway is pyrimidine metabolism; CTP biosynthesis via salvage pathway; CTP from cytidine: step 1/3. It functions in the pathway pyrimidine metabolism; UMP biosynthesis via salvage pathway; UMP from uridine: step 1/1. This is Uridine kinase (udk) from Mycoplasma genitalium (strain ATCC 33530 / DSM 19775 / NCTC 10195 / G37) (Mycoplasmoides genitalium).